We begin with the raw amino-acid sequence, 196 residues long: ATP-dependent Clp protease proteolytic subunit (196 aa).

Ser101 acts as the Nucleophile in catalysis. His126 is an active-site residue.

The protein belongs to the peptidase S14 family. As to quaternary structure, component of the chloroplastic Clp protease core complex.

It localises to the plastid. The protein resides in the chloroplast stroma. The enzyme catalyses Hydrolysis of proteins to small peptides in the presence of ATP and magnesium. alpha-casein is the usual test substrate. In the absence of ATP, only oligopeptides shorter than five residues are hydrolyzed (such as succinyl-Leu-Tyr-|-NHMec, and Leu-Tyr-Leu-|-Tyr-Trp, in which cleavage of the -Tyr-|-Leu- and -Tyr-|-Trp bonds also occurs).. In terms of biological role, cleaves peptides in various proteins in a process that requires ATP hydrolysis. Has a chymotrypsin-like activity. Plays a major role in the degradation of misfolded proteins. In Pleurastrum terricola (Filamentous green alga), this protein is ATP-dependent Clp protease proteolytic subunit.